We begin with the raw amino-acid sequence, 206 residues long: LexA repressor (206 aa).

Positions 28–48 (RAEIATRLGFKSANAAEEHLK) form a DNA-binding region, H-T-H motif. Catalysis depends on for autocatalytic cleavage activity residues Ser123 and Lys160.

The protein belongs to the peptidase S24 family. Homodimer.

It catalyses the reaction Hydrolysis of Ala-|-Gly bond in repressor LexA.. Its function is as follows. Represses a number of genes involved in the response to DNA damage (SOS response), including recA and lexA. In the presence of single-stranded DNA, RecA interacts with LexA causing an autocatalytic cleavage which disrupts the DNA-binding part of LexA, leading to derepression of the SOS regulon and eventually DNA repair. This is LexA repressor from Shewanella baltica (strain OS223).